The primary structure comprises 87 residues: Small ribosomal subunit protein uS15c (87 aa).

It belongs to the universal ribosomal protein uS15 family. As to quaternary structure, part of the 30S ribosomal subunit.

The protein localises to the plastid. Its subcellular location is the chloroplast. The sequence is that of Small ribosomal subunit protein uS15c (rps15) from Amborella trichopoda.